A 466-amino-acid chain; its full sequence is Asparagine--tRNA ligase (466 aa).

Belongs to the class-II aminoacyl-tRNA synthetase family. Homodimer.

It localises to the cytoplasm. The enzyme catalyses tRNA(Asn) + L-asparagine + ATP = L-asparaginyl-tRNA(Asn) + AMP + diphosphate + H(+). The sequence is that of Asparagine--tRNA ligase from Shewanella sp. (strain MR-7).